The sequence spans 159 residues: Phosphopantetheine adenylyltransferase (159 aa).

Position 10 (threonine 10) interacts with substrate. Residues 10-11 and histidine 18 contribute to the ATP site; that span reads TF. Positions 42, 74, and 88 each coordinate substrate. Residues 89–91, glutamate 99, and 124–130 contribute to the ATP site; these read GLR and NAFISSS.

Belongs to the bacterial CoaD family. In terms of assembly, homohexamer. Mg(2+) is required as a cofactor.

The protein localises to the cytoplasm. It catalyses the reaction (R)-4'-phosphopantetheine + ATP + H(+) = 3'-dephospho-CoA + diphosphate. The protein operates within cofactor biosynthesis; coenzyme A biosynthesis; CoA from (R)-pantothenate: step 4/5. Its function is as follows. Reversibly transfers an adenylyl group from ATP to 4'-phosphopantetheine, yielding dephospho-CoA (dPCoA) and pyrophosphate. The chain is Phosphopantetheine adenylyltransferase from Campylobacter fetus subsp. fetus (strain 82-40).